Here is a 77-residue protein sequence, read N- to C-terminus: uncharacterized protein (77 aa).

A helical membrane pass occupies residues 13–33; the sequence is VPVIRLSVFLHFFFVFPFCLL.

The protein resides in the membrane. This is an uncharacterized protein from Saccharomyces cerevisiae (strain ATCC 204508 / S288c) (Baker's yeast).